The primary structure comprises 86 residues: Exopolysaccharide production repressor protein (86 aa).

The chain crosses the membrane as a helical span at residues 18–38; it reads FAVTLAASVFLQVVYFLSLLF. A disordered region spans residues 44 to 86; the sequence is TRESDRSIHSGTRQADQPQKRDRDKTEQSNVPKLDPRRKRRTP. Basic and acidic residues predominate over residues 61-70; the sequence is PQKRDRDKTE.

The protein resides in the cell membrane. The protein operates within glycan metabolism; exopolysaccharide biosynthesis. Its function is as follows. Inhibition of exopolysaccharide synthesis (EPS) and nodulation ability (NOD). This Rhizobium leguminosarum bv. phaseoli protein is Exopolysaccharide production repressor protein (exoX).